We begin with the raw amino-acid sequence, 273 residues long: NADPH-dependent 7-cyano-7-deazaguanine reductase (273 aa).

81–83 (VES) contributes to the substrate binding site. Residue 83–84 (SK) coordinates NADPH. Residue Cys-179 is the Thioimide intermediate of the active site. The Proton donor role is filled by Asp-186. Residue 218–219 (AE) participates in substrate binding. 247-248 (RG) is a binding site for NADPH.

It belongs to the GTP cyclohydrolase I family. QueF type 2 subfamily. Homodimer.

Its subcellular location is the cytoplasm. It carries out the reaction 7-aminomethyl-7-carbaguanine + 2 NADP(+) = 7-cyano-7-deazaguanine + 2 NADPH + 3 H(+). The protein operates within tRNA modification; tRNA-queuosine biosynthesis. Catalyzes the NADPH-dependent reduction of 7-cyano-7-deazaguanine (preQ0) to 7-aminomethyl-7-deazaguanine (preQ1). The sequence is that of NADPH-dependent 7-cyano-7-deazaguanine reductase from Rickettsia akari (strain Hartford).